The sequence spans 357 residues: GTPase Obg (357 aa).

Residues 1-159 enclose the Obg domain; the sequence is MKFVDEAEIQ…RTLKLELKLL (159 aa). Residues 160-343 enclose the OBG-type G domain; that stretch reads ADIGMLGFPN…IMKSAMTLFE (184 aa). Residues 166–173, 191–195, 213–216, 293–296, and 324–326 contribute to the GTP site; these read GFPNVGKS, FTTLY, DVPG, NKAD, and SAV. Mg(2+)-binding residues include Ser173 and Thr193.

This sequence belongs to the TRAFAC class OBG-HflX-like GTPase superfamily. OBG GTPase family. As to quaternary structure, monomer. Mg(2+) serves as cofactor.

It is found in the cytoplasm. In terms of biological role, an essential GTPase which binds GTP, GDP and possibly (p)ppGpp with moderate affinity, with high nucleotide exchange rates and a fairly low GTP hydrolysis rate. Plays a role in control of the cell cycle, stress response, ribosome biogenesis and in those bacteria that undergo differentiation, in morphogenesis control. The chain is GTPase Obg from Xylella fastidiosa (strain 9a5c).